The chain runs to 581 residues: Kelch-like protein 38 (581 aa).

Residues 34–101 (TDVSICAGAR…VYTGEAHIAT (68 aa)) form the BTB domain. Residues 136–237 (CLGMIRLSEI…HPAFFHHFIA (102 aa)) enclose the BACK domain. Kelch repeat units follow at residues 285-332 (FLIL…TLHR), 334-383 (IYVL…AHKN), 384-431 (FIFS…VKDQ), 433-479 (LYLF…VLGE), 480-521 (RIVI…VMGN), and 523-573 (LYVT…TLQC).

This Homo sapiens (Human) protein is Kelch-like protein 38 (KLHL38).